The chain runs to 201 residues: Oligoribonuclease (201 aa).

The region spanning L20 to L183 is the Exonuclease domain. The active site involves Y141.

This sequence belongs to the oligoribonuclease family.

It localises to the cytoplasm. Functionally, 3'-to-5' exoribonuclease specific for small oligoribonucleotides. The protein is Oligoribonuclease of Burkholderia pseudomallei (strain 1106a).